The primary structure comprises 349 residues: tRNA N6-adenosine threonylcarbamoyltransferase (349 aa).

Residues His114 and His118 each coordinate Fe cation. Substrate-binding positions include 136–140 (IMSGG), Asp169, Gly182, and Asn280. Asp308 contacts Fe cation.

This sequence belongs to the KAE1 / TsaD family. It depends on Fe(2+) as a cofactor.

It localises to the cytoplasm. The catalysed reaction is L-threonylcarbamoyladenylate + adenosine(37) in tRNA = N(6)-L-threonylcarbamoyladenosine(37) in tRNA + AMP + H(+). In terms of biological role, required for the formation of a threonylcarbamoyl group on adenosine at position 37 (t(6)A37) in tRNAs that read codons beginning with adenine. Is involved in the transfer of the threonylcarbamoyl moiety of threonylcarbamoyl-AMP (TC-AMP) to the N6 group of A37, together with TsaE and TsaB. TsaD likely plays a direct catalytic role in this reaction. The polypeptide is tRNA N6-adenosine threonylcarbamoyltransferase (Ehrlichia chaffeensis (strain ATCC CRL-10679 / Arkansas)).